A 534-amino-acid polypeptide reads, in one-letter code: MPEDKVEAIEHVESSRHDATVNEKAIADFLNAEKEMTTWQAVRAHRRLLLFAAYRVTHLAILPFVCASNYGYDTVSNGSSIAMPAFIMSFGAMNHATGSMYLPSIWTSLWTSMTNLGQALGSLIAGFLAERIGRRWTAVSLAILSIVGTFILVFSSTRGMLLVGKTMNGAVVGGLMAIGTTYAADVAPIKLRGALLQAIVFFGVAMQGVSLGIVRAFILDMRPLAWKIVFGIQWAFATLVLIAAFLVPESPVFYVAHGKHDKAQSALRRLHGSSDQYLHIRYGAIVHALDEERKQQSESVSWAELFKGCNLKRTITIGFIMFSTSAIGVPFLTQNIYFLITVGLNVTSVFDIGIGGFFLGCLFVMLGWLSNEGIGRRRLWLWGLIGNFLCMVTIGALGFSTTKASQLAIAVIMNVLISYGVYATVGVAWTICPEISSHRLRQYSQSVAFIVGAVGGWLFNFITPYMYNVDSGNLGAKTGFVYAGLTVVVAVISWFLVPETAGLSVEDIDRAYEMGTAPRHFKSAKATVSAESGH.

12 helical membrane passes run 48 to 68, 109 to 129, 136 to 156, 169 to 189, 194 to 214, 228 to 248, 326 to 346, 349 to 369, 379 to 399, 407 to 427, 447 to 467, and 478 to 498; these read LLLFAAYRVTHLAILPFVCAS, LWTSMTNLGQALGSLIAGFLA, WTAVSLAILSIVGTFILVFSS, GAVVGGLMAIGTTYAADVAPI, ALLQAIVFFGVAMQGVSLGIV, IVFGIQWAFATLVLIAAFLVP, AIGVPFLTQNIYFLITVGLNV, VFDIGIGGFFLGCLFVMLGWL, LWLWGLIGNFLCMVTIGALGF, LAIAVIMNVLISYGVYATVGV, VAFIVGAVGGWLFNFITPYMY, and TGFVYAGLTVVVAVISWFLVP.

This sequence belongs to the major facilitator superfamily. Sugar transporter (TC 2.A.1.1) family.

Its subcellular location is the cytoplasmic vesicle membrane. Its function is as follows. MFS transporter; part of the gene cluster that mediates the biosynthesis of the antitumor cytotoxic peptidyl alkaloids fumiquinazolines that confer a dual-usage capability to defend against phagocytes in the environment and animal hosts. Probably involved in fumiquinazolines metabolism and transport. This Aspergillus fumigatus (strain ATCC MYA-4609 / CBS 101355 / FGSC A1100 / Af293) (Neosartorya fumigata) protein is MFS transporter fmqE.